Here is a 668-residue protein sequence, read N- to C-terminus: SH2 domain-containing protein B (668 aa).

The segment at 373–411 (SVSGSEESYQQCNSHPQTSRQFENGNGMRLHEEDNSSID) is disordered. Positions 374 to 396 (VSGSEESYQQCNSHPQTSRQFEN) are enriched in polar residues. The SH2 domain occupies 574 to 642 (WIEGFITKEE…DNICESSERY (69 aa)).

In terms of processing, phosphorylated on tyrosine residues. In terms of tissue distribution, expressed in roots, leaves, stems and flowers.

The sequence is that of SH2 domain-containing protein B from Arabidopsis thaliana (Mouse-ear cress).